The chain runs to 228 residues: uncharacterized protein (228 aa).

4 helical membrane-spanning segments follow: residues 37–54 (WCMH…TLIV), 67–89 (VVSI…STGV), 104–126 (HIGI…TSRL), and 138–160 (VLHV…LVLY).

The protein localises to the cell membrane. This is an uncharacterized protein from Treponema pallidum (strain Nichols).